The sequence spans 954 residues: Kinesin-like protein KIN-7A (954 aa).

Positions 1-29 (MGVSRPPSTPASKIERTPMSTPTPGGSTR) are disordered. Over residues 17 to 28 (TPMSTPTPGGST) the composition is skewed to low complexity. The 321-residue stretch at 34–354 (KIFVTVRVRP…LFFATCAKEV (321 aa)) folds into the Kinesin motor domain. Residue 119 to 126 (GQTSSGKT) coordinates ATP. Coiled coils occupy residues 363–436 (VVSD…GDNQ) and 480–588 (LKHE…LVMS). 2 disordered regions span residues 624–689 (PNLI…SSVN) and 741–762 (GKTN…DGPD). The span at 630 to 639 (PCSPLSSSRP) shows a compositional bias: low complexity. Composition is skewed to basic and acidic residues over residues 640-660 (LEPE…EGSE) and 666-681 (KSED…ETPR).

It belongs to the TRAFAC class myosin-kinesin ATPase superfamily. Kinesin family. KIN-7 subfamily. Ubiquitous with a preferential expression in the shoot apical meristem (SAM).

May be essential to promote the progression of cytokinesis during node-internode differentiation. The polypeptide is Kinesin-like protein KIN-7A (Oryza sativa subsp. japonica (Rice)).